The following is a 338-amino-acid chain: tRNA N6-adenosine threonylcarbamoyltransferase (338 aa).

Residues His110 and His114 each coordinate Fe cation. Substrate contacts are provided by residues 132–136 (LLSGG), Asp165, Gly178, and Asn274. Residue Asp298 coordinates Fe cation.

Belongs to the KAE1 / TsaD family. The cofactor is Fe(2+).

Its subcellular location is the cytoplasm. The catalysed reaction is L-threonylcarbamoyladenylate + adenosine(37) in tRNA = N(6)-L-threonylcarbamoyladenosine(37) in tRNA + AMP + H(+). In terms of biological role, required for the formation of a threonylcarbamoyl group on adenosine at position 37 (t(6)A37) in tRNAs that read codons beginning with adenine. Is involved in the transfer of the threonylcarbamoyl moiety of threonylcarbamoyl-AMP (TC-AMP) to the N6 group of A37, together with TsaE and TsaB. TsaD likely plays a direct catalytic role in this reaction. The sequence is that of tRNA N6-adenosine threonylcarbamoyltransferase from Borrelia garinii subsp. bavariensis (strain ATCC BAA-2496 / DSM 23469 / PBi) (Borreliella bavariensis).